The primary structure comprises 331 residues: MIDTNLLRVTVCDEGELEKSTTHFIGSRKIEPEQWITWASECKYLPESDAVALCATLIDRLSLEANVVPVSSPVTICGDIHGQFYDLLELFKTGGTVPNTKYVFMGDYVDRGHYSLETVTLLFCLLLKYPNQITLLRGNHESRRISNVYGFYDECQNKYGHGNVHKWFCKVFDVLPIGALIDESVLCVHGGLSPDIRTIDSLMLLDRAQEVPNKGPLCDIMWSDPDDDVEDWVISQRGAGFVFGAKVTEEFLMNNDLSLLCRSHQLVDEGFKYMFNEKLATVWSAPNYCYRCGNAAAVFEIDGNNRSTKYFNAVPDGSREKPDRVVAPYFL.

Asp79, His81, Asp107, and Asn139 together coordinate Mn(2+). The Proton donor role is filled by His140. His189 and His264 together coordinate Mn(2+).

It belongs to the PPP phosphatase family. PP-6 (PP-V) subfamily. As to quaternary structure, forms a complex composed of catalytic subunit pph-6 and regulatory subunit saps-1; the interaction increases pph-6 and saps-1 protein stability. Mn(2+) is required as a cofactor.

Its subcellular location is the cytoplasm. The protein resides in the cell cortex. It localises to the cytoskeleton. The protein localises to the spindle pole. It catalyses the reaction O-phospho-L-seryl-[protein] + H2O = L-seryl-[protein] + phosphate. It carries out the reaction O-phospho-L-threonyl-[protein] + H2O = L-threonyl-[protein] + phosphate. In terms of biological role, catalytic subunit of protein phosphatase 6 (PP6). In complex with saps-1, promotes actomyosin contractility during cytokinesis by regulating the organization of cortical non-muscle myosin II nmy-2 and thus contributing to correct spindle positioning. Also required for the proper generation of pulling forces on spindle poles during anaphase by regulating the cortical localization of gpr-1, gpr-2 and lin-5. In Caenorhabditis elegans, this protein is Serine/threonine-protein phosphatase 6 catalytic subunit.